Consider the following 319-residue polypeptide: ATP-dependent 6-phosphofructokinase (319 aa).

Gly11 serves as a coordination point for ATP. An ADP-binding site is contributed by 21–25 (RAVVR). ATP is bound by residues 72–73 (RC) and 102–105 (GDGS). Mg(2+) is bound at residue Asp103. Residue 125–127 (TID) participates in substrate binding. The active-site Proton acceptor is the Asp127. Arg154 contributes to the ADP binding site. Residues Arg162 and 169–171 (MGR) contribute to the substrate site. ADP contacts are provided by residues 185 to 187 (GAE), Arg211, and 213 to 215 (KKH). Substrate is bound by residues Glu222, Arg243, and 249 to 252 (HIQR).

Belongs to the phosphofructokinase type A (PFKA) family. ATP-dependent PFK group I subfamily. Prokaryotic clade 'B1' sub-subfamily. In terms of assembly, homotetramer. Mg(2+) is required as a cofactor.

Its subcellular location is the cytoplasm. The enzyme catalyses beta-D-fructose 6-phosphate + ATP = beta-D-fructose 1,6-bisphosphate + ADP + H(+). It functions in the pathway carbohydrate degradation; glycolysis; D-glyceraldehyde 3-phosphate and glycerone phosphate from D-glucose: step 3/4. With respect to regulation, allosterically activated by ADP and other diphosphonucleosides, and allosterically inhibited by phosphoenolpyruvate. Catalyzes the phosphorylation of D-fructose 6-phosphate to fructose 1,6-bisphosphate by ATP, the first committing step of glycolysis. In Bacillus pumilus (strain SAFR-032), this protein is ATP-dependent 6-phosphofructokinase.